Consider the following 258-residue polypeptide: Exosome complex component Rrp41 (258 aa).

It belongs to the RNase PH family. Rrp41 subfamily. As to quaternary structure, component of the archaeal exosome complex. Forms a hexameric ring-like arrangement composed of 3 Rrp41-Rrp42 heterodimers. The hexameric ring associates with a trimer of Rrp4 and/or Csl4 subunits.

It localises to the cytoplasm. In terms of biological role, catalytic component of the exosome, which is a complex involved in RNA degradation. Has 3'-&gt;5' exoribonuclease activity. Can also synthesize heteromeric RNA-tails. The polypeptide is Exosome complex component Rrp41 (Archaeoglobus fulgidus (strain ATCC 49558 / DSM 4304 / JCM 9628 / NBRC 100126 / VC-16)).